We begin with the raw amino-acid sequence, 661 residues long: CD180 antigen (661 aa).

An N-terminal signal peptide occupies residues 1–20 (MAPDISCFFLVALFLASCRA). Residues 21–626 (TTSSDQKCIE…RLSDVTLSCS (606 aa)) are Extracellular-facing. The region spanning 33 to 53 (VNKTYNCENLGLNEIPGTLPN) is the LRRNT domain. Residues Asn-34, Asn-53, Asn-70, and Asn-78 are each glycosylated (N-linked (GlcNAc...) asparagine). 7 LRR repeats span residues 54 to 75 (STECLEFSFNVLPTIQNTTFSR), 78 to 99 (NLTFLDLTRCQIYWIHEDTFQS), 102 to 123 (RLDTLVLTANPLIFMAETALSG), 126 to 147 (ALKHLFFIQTGISSIDFIPLHN), 150 to 171 (TLESLYLGSNHISSIKLPKGFP), 174 to 195 (KLKVLDFQNNAIHYLSKEDMSS), and 201 to 221 (NLSLNLNGNDIAGIELGAFDS). 3 N-linked (GlcNAc...) asparagine glycosylation sites follow: Asn-201, Asn-244, and Asn-288. 5 LRR repeats span residues 275–296 (SVESINLQKHYFFNISSNTFHC), 299–321 (GLQELDLTATHLSELPSGLVGLS), 322–343 (TLKKLVLSANKFENLCQISASN), 346–366 (SLTHLSIKGNTKRLELGTGCL), and 371–391 (NLRELDLSHDDIETSDCCNLQ). Residues Asn-394 and Asn-402 are each glycosylated (N-linked (GlcNAc...) asparagine). 7 LRR repeats span residues 397-418 (HLQSLNLSYNEPLSLKTEAFKE), 421-442 (QLELLDLAFTRLKVKDAQSPFQ), 446-466 (LLKVLNLSHSLLDISSEQLFD), 470-493 (ALQHLNLQGNHFPKGNIQKTNSLQ), 497-518 (RLEILVLSFCDLSSIDQHAFTS), 521-544 (MMNHVDLSHNRLTSSSIEALSHLK), and 546-566 (IYLNLASNRISIILPSLLPIL). The N-linked (GlcNAc...) asparagine glycan is linked to Asn-451. The LRRCT domain maps to 577–627 (NPLDCTCSNIYFLEWYKENMQKLEDTEDTLCENPPLLRGVRLSDVTLSCSM). Residues 627 to 650 (MAAVGIFFLIVFLLVFAILLIFAV) traverse the membrane as a helical segment. The Cytoplasmic portion of the chain corresponds to 651-661 (KYFLRWKYQHI).

The protein belongs to the Toll-like receptor family. M-shaped tetramer of two CD180-LY86 heterodimers. In terms of tissue distribution, B-lymphocytes and spleen. Not detected in thymus, kidney, muscle, heart, brain or liver.

The protein localises to the cell membrane. May cooperate with MD-1 and TLR4 to mediate the innate immune response to bacterial lipopolysaccharide (LPS) in B-cells. Leads to NF-kappa-B activation. Also involved in the life/death decision of B-cells. The protein is CD180 antigen (Cd180) of Mus musculus (Mouse).